The sequence spans 263 residues: L-histidine 2-aminobutanoyltransferase (263 aa).

This sequence belongs to the methyltransferase superfamily. CntL family. As to quaternary structure, interacts with CntM.

The catalysed reaction is L-histidine + S-adenosyl-L-methionine = (2S)-2-amino-4-{[(1S)-1-carboxy-2-(1H-imidazol-4-yl)ethyl]amino}butanoate + S-methyl-5'-thioadenosine + H(+). Catalyzes the nucleophilic attack of one alpha-aminobutanoate moiety from SAM onto L-histidine to produce the intermediate (2S)-2-amino-4-{[(1S)-1-carboxy-2-(1H-imidazol-4-yl)ethyl]amino}butanoate. Functions in the biosynthesis of the metallophore pseudopaline, which is involved in the acquisition of nickel and zinc, and thus enables bacterial growth inside the host, where metal access is limited. Therefore, this enzyme probably contributes to Pseudomonas virulence. Cannot use D-histidine in place of L-histidine as substrate. The protein is L-histidine 2-aminobutanoyltransferase of Pseudomonas aeruginosa (strain UCBPP-PA14).